Reading from the N-terminus, the 205-residue chain is Ribonuclease HII (205 aa).

One can recognise an RNase H type-2 domain in the interval 16–205; it reads VSEVGIDEVG…KSFLKKSKLI (190 aa). A divalent metal cation is bound by residues D22, E23, and D118.

This sequence belongs to the RNase HII family. The cofactor is Mn(2+). It depends on Mg(2+) as a cofactor.

It is found in the cytoplasm. The catalysed reaction is Endonucleolytic cleavage to 5'-phosphomonoester.. Its function is as follows. Endonuclease that specifically degrades the RNA of RNA-DNA hybrids. The sequence is that of Ribonuclease HII from Prochlorococcus marinus (strain AS9601).